The primary structure comprises 362 residues: 3-ketodihydrosphingosine reductase gsl-3 (362 aa).

Leucine 55 is a binding site for NADP(+). NADPH-binding residues include glycine 58, serine 60, glycine 62, and arginine 83. The short motif at 58-62 (GASEG) is the GXSXG element. Residue asparagine 84 participates in NADP(+) binding. NADPH is bound by residues arginine 87 and aspartate 113. Residues aspartate 113, arginine 176, tyrosine 216, lysine 220, isoleucine 252, and serine 254 each contribute to the NADP(+) site. Catalysis depends on tyrosine 216, which acts as the Proton acceptor. The Lowers pKa of active site Tyr role is filled by lysine 220. Residues 318–338 (NNWVLDTLMGWLIPIIYFFVL) traverse the membrane as a helical segment.

The protein belongs to the short-chain dehydrogenases/reductases (SDR) family.

It is found in the endoplasmic reticulum membrane. It carries out the reaction sphinganine + NADP(+) = 3-oxosphinganine + NADPH + H(+). The protein operates within lipid metabolism; sphingolipid metabolism. In terms of biological role, catalyzes the reduction of 3'-oxosphinganine (3-ketodihydrosphingosine/KDS) to sphinganine (dihydrosphingosine/DHS), the second step of de novo sphingolipid biosynthesis. In Neurospora crassa (strain ATCC 24698 / 74-OR23-1A / CBS 708.71 / DSM 1257 / FGSC 987), this protein is 3-ketodihydrosphingosine reductase gsl-3 (gsl-3).